Reading from the N-terminus, the 206-residue chain is Triosephosphate isomerase (206 aa).

Residue His-76 is the Electrophile of the active site. Glu-146 acts as the Proton acceptor in catalysis.

The protein belongs to the triosephosphate isomerase family. Homodimer.

It catalyses the reaction D-glyceraldehyde 3-phosphate = dihydroxyacetone phosphate. The protein operates within carbohydrate biosynthesis; gluconeogenesis. It participates in carbohydrate degradation; glycolysis; D-glyceraldehyde 3-phosphate from glycerone phosphate: step 1/1. The protein is Triosephosphate isomerase (Tpi) of Aedes togoi (Mosquito).